Consider the following 588-residue polypeptide: 2-succinyl-5-enolpyruvyl-6-hydroxy-3-cyclohexene-1-carboxylate synthase (588 aa).

The disordered stretch occupies residues 1–22; sequence MTTTGSLPAQPSSTSPRTGNPS.

This sequence belongs to the TPP enzyme family. MenD subfamily. Homodimer. Mg(2+) is required as a cofactor. It depends on Mn(2+) as a cofactor. Requires thiamine diphosphate as cofactor.

It carries out the reaction isochorismate + 2-oxoglutarate + H(+) = 5-enolpyruvoyl-6-hydroxy-2-succinyl-cyclohex-3-ene-1-carboxylate + CO2. The protein operates within quinol/quinone metabolism; 1,4-dihydroxy-2-naphthoate biosynthesis; 1,4-dihydroxy-2-naphthoate from chorismate: step 2/7. It participates in quinol/quinone metabolism; menaquinone biosynthesis. Catalyzes the thiamine diphosphate-dependent decarboxylation of 2-oxoglutarate and the subsequent addition of the resulting succinic semialdehyde-thiamine pyrophosphate anion to isochorismate to yield 2-succinyl-5-enolpyruvyl-6-hydroxy-3-cyclohexene-1-carboxylate (SEPHCHC). This Clavibacter michiganensis subsp. michiganensis (strain NCPPB 382) protein is 2-succinyl-5-enolpyruvyl-6-hydroxy-3-cyclohexene-1-carboxylate synthase.